A 236-amino-acid polypeptide reads, in one-letter code: MEPIYEGKAKRLYTTDNPNVLRMEYKDDATAGNGAKKAQFENKGRMNKAITLVIYRMLESKGVKTHLVADVDDINIDVKKVSILPLEVIVRNIAAGSFSRRMGVKEGTPFKKPIVEFSYKDDSLGDPFINDDYAREMNAATEEECVFLKNQARIVNDVLIDFFKQVGLTLVDFKIEFGRLAEDPSQIVLADEISPDTCRLWDIKTGEKMDKDRFRQDLGNVMEAYEEVLSRLQNKA.

The protein belongs to the SAICAR synthetase family.

It catalyses the reaction 5-amino-1-(5-phospho-D-ribosyl)imidazole-4-carboxylate + L-aspartate + ATP = (2S)-2-[5-amino-1-(5-phospho-beta-D-ribosyl)imidazole-4-carboxamido]succinate + ADP + phosphate + 2 H(+). It functions in the pathway purine metabolism; IMP biosynthesis via de novo pathway; 5-amino-1-(5-phospho-D-ribosyl)imidazole-4-carboxamide from 5-amino-1-(5-phospho-D-ribosyl)imidazole-4-carboxylate: step 1/2. This is Phosphoribosylaminoimidazole-succinocarboxamide synthase from Akkermansia muciniphila (strain ATCC BAA-835 / DSM 22959 / JCM 33894 / BCRC 81048 / CCUG 64013 / CIP 107961 / Muc).